The sequence spans 63 residues: UPF0391 membrane protein lpg2415 (63 aa).

A run of 2 helical transmembrane segments spans residues 4–24 and 33–53; these read WALIFLIVAIVAGLFGFRGVA and VLFFLFIVMFIVLLVFSLLGG.

This sequence belongs to the UPF0391 family.

It is found in the cell membrane. The polypeptide is UPF0391 membrane protein lpg2415 (Legionella pneumophila subsp. pneumophila (strain Philadelphia 1 / ATCC 33152 / DSM 7513)).